Consider the following 136-residue polypeptide: Histone H3.1/H3.2 (136 aa).

Residues 1 to 42 form a disordered region; sequence MARTKQTARKSTGGKAPRKQLASKAARKAAPATGGVKKPHRY. At K5 the chain carries N6,N6,N6-trimethyllysine; alternate. K5 is subject to N6,N6-dimethyllysine; alternate. K5 and K10 each carry N6-methyllysine; alternate. Residue K10 is modified to N6-acetyllysine; alternate. Phosphoserine is present on S11. K15 carries the N6,N6-dimethyllysine; alternate modification. 5 positions are modified to N6-acetyllysine; alternate: K15, K19, K24, K28, and K37. 4 positions are modified to N6-methyllysine; alternate: K19, K24, K28, and K37. Over residues 19–32 the composition is skewed to low complexity; sequence KQLASKAARKAAPA. An N6,N6,N6-trimethyllysine; alternate mark is found at K28 and K37. 2 positions are modified to N6,N6-dimethyllysine; alternate: K28 and K37. N6-acetyllysine is present on residues K57 and K65. K80 carries the N6,N6,N6-trimethyllysine; alternate modification. An N6,N6-dimethyllysine; alternate modification is found at K80. At K80 the chain carries N6-methyllysine; alternate.

The protein belongs to the histone H3 family. As to quaternary structure, the nucleosome is a histone octamer containing two molecules each of H2A, H2B, H3 and H4 assembled in one H3-H4 heterotetramer and two H2A-H2B heterodimers. The octamer wraps approximately 147 bp of DNA. In terms of processing, phosphorylated by ark1 to form H3S10ph in a cell cycle-dependent manner during mitosis and meiosis. H3S10ph is also formed by ssp2, promotes subsequent H3K14ac formation by gcn5, and is required for transcriptional activation through TBP recruitment to the promoters. Dephosphorylation is performed by sds21. Post-translationally, mono-, di- and trimethylated by the COMPASS complex to form H3K4me1/2/3. H3K4me activates gene expression by regulating transcription elongation and plays a role in telomere length maintenance. H3K4me enrichment correlates with transcription levels, and occurs in a 5' to 3' gradient with H3K4me3 enrichment at the 5'-end of genes, shifting to H3K4me2 and then H3K4me1. Methylated by clr4 to form H3K9me1. H3K9me1 represents a specific tag for epigenetic transcriptional repression by recruiting swi6/HP1 to methylated histones. Targeting to histone probably involves clr3 and rik1. Essential for silencing of centromeres and directional switching of the mating type. Methylated by set2 to form H3K36me. H3K36me represses gene expression. Methylated by dot1 to form H3K79me. H3K79me is required for association of SIR proteins with telomeric regions and for telomeric silencing. The COMPASS-mediated formation of H3K4me2/3 and the dot1-mediated formation of H3K79me require H2BK123ub1. Acetylation of histone H3 leads to transcriptional activation. H3K14ac formation by gcn5 is promoted by H3S10ph. H3K14ac can also be formed by esa1. H3K56ac formation occurs predominantly in newly synthesized H3 molecules during G1, S and G2/M of the cell cycle and may be involved in DNA repair.

Its subcellular location is the nucleus. It is found in the chromosome. In terms of biological role, core component of nucleosome. Nucleosomes wrap and compact DNA into chromatin, limiting DNA accessibility to the cellular machineries which require DNA as a template. Histones thereby play a central role in transcription regulation, DNA repair, DNA replication and chromosomal stability. DNA accessibility is regulated via a complex set of post-translational modifications of histones, also called histone code, and nucleosome remodeling. The polypeptide is Histone H3.1/H3.2 (hht1) (Schizosaccharomyces pombe (strain 972 / ATCC 24843) (Fission yeast)).